Consider the following 512-residue polypeptide: Neuronal acetylcholine receptor subunit alpha-2 (512 aa).

The signal sequence occupies residues 1 to 27 (MAPSHPAFQFWIHLYLWCLLLMPAVLA). The Extracellular segment spans residues 28–241 (QQGSHTHAED…VTYYFVIRRL (214 aa)). N-linked (GlcNAc...) asparagine glycosylation is found at Asn-56 and Asn-106. A disulfide bridge links Cys-160 with Cys-174. Asn-212 carries an N-linked (GlcNAc...) asparagine glycan. The cysteines at positions 224 and 225 are disulfide-linked. Transmembrane regions (helical) follow at residues 242–266 (PLFYTINLIIPCLLISCLTVLVFYL), 274–292 (ITLCISVLLSLTVFLLLIT), and 308–329 (YLLFTMIFVTLSIVITVFVLNV). Over 330–485 (HHRSPSTHNM…WKYVAMVVDR (156 aa)) the chain is Cytoplasmic. The chain crosses the membrane as a helical span at residues 486-504 (IFLWLFIIVCFLGTIGLFL).

The protein belongs to the ligand-gated ion channel (TC 1.A.9) family. Acetylcholine receptor (TC 1.A.9.1) subfamily. Alpha-2/CHRNA2 sub-subfamily. In terms of assembly, neuronal AChR is composed of two different types of subunits: alpha and non-alpha (beta). CHRNA2/alpha-2 subunit can be combined to CHRNB2/beta-2 or CHRNB4/beta-4 to give rise to functional receptors. Both CHRNA2:CHRNB2 and CHRNA2:CHRNB4 nAChR complexes are heteropentamers with two subtypes: LS (low agonist sensitivity) with a (CHRNA2)3:(CHRNB2/4)2 and HS (high agonist sensitivity) with a (CHRNA2)2:(CHRNB2/4)3 stoichiometries; the subtypes differ in their subunit binding interfaces which are involved in ligand binding.

The protein resides in the synaptic cell membrane. It is found in the cell membrane. The catalysed reaction is Ca(2+)(in) = Ca(2+)(out). It carries out the reaction K(+)(in) = K(+)(out). The enzyme catalyses Na(+)(in) = Na(+)(out). Component of neuronal acetylcholine receptors (nAChRs) that function as pentameric, ligand-gated cation channels with high calcium permeability among other activities. nAChRs are excitatory neurotrasnmitter receptors formed by a collection of nAChR subunits known to mediate synaptic transmission in the nervous system and the neuromuscular junction. Each nAchR subunit confers differential attributes to channel properties, including activation, deactivation and desensitization kinetics, pH sensitivity, cation permeability, and binding to allosteric modulators. CHRNA2 forms heteropentameric neuronal acetylcholine receptors with CHRNB2 and CHRNB4 and plays a role in nicotine dependence. The chain is Neuronal acetylcholine receptor subunit alpha-2 (Chrna2) from Mus musculus (Mouse).